The sequence spans 286 residues: ATP phosphoribosyltransferase (286 aa).

The protein belongs to the ATP phosphoribosyltransferase family. Long subfamily. It depends on Mg(2+) as a cofactor.

The protein resides in the cytoplasm. It carries out the reaction 1-(5-phospho-beta-D-ribosyl)-ATP + diphosphate = 5-phospho-alpha-D-ribose 1-diphosphate + ATP. It functions in the pathway amino-acid biosynthesis; L-histidine biosynthesis; L-histidine from 5-phospho-alpha-D-ribose 1-diphosphate: step 1/9. With respect to regulation, feedback inhibited by histidine. Its function is as follows. Catalyzes the condensation of ATP and 5-phosphoribose 1-diphosphate to form N'-(5'-phosphoribosyl)-ATP (PR-ATP). Has a crucial role in the pathway because the rate of histidine biosynthesis seems to be controlled primarily by regulation of HisG enzymatic activity. The chain is ATP phosphoribosyltransferase from Cytophaga hutchinsonii (strain ATCC 33406 / DSM 1761 / CIP 103989 / NBRC 15051 / NCIMB 9469 / D465).